The chain runs to 318 residues: Ribosomal RNA small subunit methyltransferase A (318 aa).

Residues Asn-40, Val-42, Gly-67, Glu-88, Asp-118, and Asn-137 each contribute to the S-adenosyl-L-methionine site. Positions 296–305 (ADRGGSDREG) are enriched in basic and acidic residues. Residues 296-318 (ADRGGSDREGTSPPTAGQGAPAC) form a disordered region.

Belongs to the class I-like SAM-binding methyltransferase superfamily. rRNA adenine N(6)-methyltransferase family. RsmA subfamily.

The protein resides in the cytoplasm. It carries out the reaction adenosine(1518)/adenosine(1519) in 16S rRNA + 4 S-adenosyl-L-methionine = N(6)-dimethyladenosine(1518)/N(6)-dimethyladenosine(1519) in 16S rRNA + 4 S-adenosyl-L-homocysteine + 4 H(+). In terms of biological role, specifically dimethylates two adjacent adenosines (A1518 and A1519) in the loop of a conserved hairpin near the 3'-end of 16S rRNA in the 30S particle. May play a critical role in biogenesis of 30S subunits. This chain is Ribosomal RNA small subunit methyltransferase A, found in Mycobacterium avium (strain 104).